The sequence spans 543 residues: CTP synthase (543 aa).

Positions 1–265 are amidoligase domain; sequence MTRFIFVTGG…DQIVLDKFGL (265 aa). Serine 13 is a CTP binding site. A UTP-binding site is contributed by serine 13. ATP contacts are provided by residues 14–19 and aspartate 71; that span reads SLGKGI. Mg(2+)-binding residues include aspartate 71 and glutamate 139. CTP is bound by residues 146–148, 186–191, and lysine 222; these read DIE and KTKPTQ. UTP-binding positions include 186-191 and lysine 222; that span reads KTKPTQ. Residues 290–541 enclose the Glutamine amidotransferase type-1 domain; the sequence is TIAMVGKYMD…IQAAVEQNER (252 aa). An L-glutamine-binding site is contributed by glycine 351. The active-site Nucleophile; for glutamine hydrolysis is the cysteine 378. Residues 379–382, glutamate 402, and arginine 469 contribute to the L-glutamine site; that span reads LGMQ. Active-site residues include histidine 514 and glutamate 516.

This sequence belongs to the CTP synthase family. In terms of assembly, homotetramer.

It carries out the reaction UTP + L-glutamine + ATP + H2O = CTP + L-glutamate + ADP + phosphate + 2 H(+). It catalyses the reaction L-glutamine + H2O = L-glutamate + NH4(+). The catalysed reaction is UTP + NH4(+) + ATP = CTP + ADP + phosphate + 2 H(+). It functions in the pathway pyrimidine metabolism; CTP biosynthesis via de novo pathway; CTP from UDP: step 2/2. Its activity is regulated as follows. Allosterically activated by GTP, when glutamine is the substrate; GTP has no effect on the reaction when ammonia is the substrate. The allosteric effector GTP functions by stabilizing the protein conformation that binds the tetrahedral intermediate(s) formed during glutamine hydrolysis. Inhibited by the product CTP, via allosteric rather than competitive inhibition. Its function is as follows. Catalyzes the ATP-dependent amination of UTP to CTP with either L-glutamine or ammonia as the source of nitrogen. Regulates intracellular CTP levels through interactions with the four ribonucleotide triphosphates. This Saccharophagus degradans (strain 2-40 / ATCC 43961 / DSM 17024) protein is CTP synthase.